We begin with the raw amino-acid sequence, 236 residues long: Cancer/testis antigen 55 (236 aa).

Positions 57 to 84 (RSSADVETGDNPLKAEPNLPAAVEEQSP) are disordered.

As to quaternary structure, interacts with GABARAP; this interaction may be important for GABARAP protein stability. Interacts with LAMP2; this interaction may be important for LAMP2 protein stability. Expressed in spermatozoa (at protein level).

The protein localises to the cytoplasm. It is found in the cytoplasmic vesicle. It localises to the secretory vesicle. Its subcellular location is the acrosome. The protein resides in the cell projection. The protein localises to the cilium. It is found in the flagellum. In terms of biological role, plays a role in spermatogenesis, possibly acting in the regulation of the autophagy pathway. The sequence is that of Cancer/testis antigen 55 (Ct55) from Mus musculus (Mouse).